Consider the following 109-residue polypeptide: Fluoride-specific ion channel FluC 1 (109 aa).

Helical transmembrane passes span 21–41 (LFINNNFIVSIIGSLLFGFFI), 52–72 (IILSGFFSCFTSFSGFIYFLY), and 84–104 (IIFCNLIIIINLLVMYFGFWI).

This sequence belongs to the fluoride channel Fluc/FEX (TC 1.A.43) family.

Its subcellular location is the cell inner membrane. It carries out the reaction fluoride(in) = fluoride(out). Its function is as follows. Fluoride-specific ion channel. Important for reducing fluoride concentration in the cell, thus reducing its toxicity. The polypeptide is Fluoride-specific ion channel FluC 1 (Prochlorococcus marinus (strain MIT 9312)).